A 580-amino-acid chain; its full sequence is Adenine deaminase (580 aa).

The protein belongs to the metallo-dependent hydrolases superfamily. Adenine deaminase family. Mn(2+) serves as cofactor.

It carries out the reaction adenine + H2O + H(+) = hypoxanthine + NH4(+). The protein is Adenine deaminase of Listeria monocytogenes serovar 1/2a (strain ATCC BAA-679 / EGD-e).